Here is an 89-residue protein sequence, read N- to C-terminus: Large ribosomal subunit protein bL27 (89 aa).

A disordered region spans residues methionine 1–arginine 20.

Belongs to the bacterial ribosomal protein bL27 family.

The sequence is that of Large ribosomal subunit protein bL27 from Jannaschia sp. (strain CCS1).